Reading from the N-terminus, the 291-residue chain is MKISITAPAKINLSLDALYKRDDGYHEVEMVMTTIDLADRLYLERLDEDKIVLDVKAHFIPEDRRNLIYQAALLLKKRFDVKMGVRITIDKHIPVSAGLAGGSSDAAAALKGLNIIWELGLSIEELAEISSEIGSDIAFCVYGGTALATGRGEKISALPNMPGCWIVLAKPSISVSTPTIYKELQVESVEHPDTKKMIESIKNGDLDGIFASTGNVLESVTLEKNPQVKRIKDRMLAFGAEAALMSGSGPTVFALIKQYSRAKRVYNGLRGFCEEVYMVRPWSEGENDTNK.

Lysine 10 is an active-site residue. Residue 94 to 104 coordinates ATP; the sequence is PVSAGLAGGSS. Residue aspartate 136 is part of the active site.

The protein belongs to the GHMP kinase family. IspE subfamily.

The enzyme catalyses 4-CDP-2-C-methyl-D-erythritol + ATP = 4-CDP-2-C-methyl-D-erythritol 2-phosphate + ADP + H(+). The protein operates within isoprenoid biosynthesis; isopentenyl diphosphate biosynthesis via DXP pathway; isopentenyl diphosphate from 1-deoxy-D-xylulose 5-phosphate: step 3/6. Catalyzes the phosphorylation of the position 2 hydroxy group of 4-diphosphocytidyl-2C-methyl-D-erythritol. The polypeptide is 4-diphosphocytidyl-2-C-methyl-D-erythritol kinase (Listeria monocytogenes serotype 4a (strain HCC23)).